The sequence spans 377 residues: Heat stress transcription factor B-2b (377 aa).

Residues 1–56 are disordered; the sequence is MPGEQTGETPTVAGVGGGGAGCSAGNSGGSSGCGAGGGGGGSGGGGGGGGDSQRSI. Residues 14-51 are compositionally biased toward gly residues; sequence GVGGGGAGCSAGNSGGSSGCGAGGGGGGSGGGGGGGGD. A DNA-binding region spans residues 57-151; that stretch reads PTPFLTKTYQ…LLRDIQRRKI (95 aa). Positions 220-265 are hydrophobic repeat HR-A/B; the sequence is TTSCTTAPELVEENERLRKDNERLRKEMTKLKGLYANIYTLMANFT. The Nuclear localization signal signature appears at 323–327; sequence KRARR. Residues 326 to 377 are disordered; that stretch reads RREEELGAAEEEDDDRREAAAQEGEQSSDVKAEPMEENNSGNHNGSWLELGK. Residues 331-340 show a composition bias toward acidic residues; it reads LGAAEEEDDD.

It belongs to the HSF family. Class B subfamily. In terms of assembly, homotrimer. In terms of processing, exhibits temperature-dependent phosphorylation.

It localises to the nucleus. In terms of biological role, transcriptional regulator that specifically binds DNA sequence 5'-AGAAnnTTCT-3' known as heat shock promoter elements (HSE). This Arabidopsis thaliana (Mouse-ear cress) protein is Heat stress transcription factor B-2b (HSFB2B).